The chain runs to 1068 residues: DNA-directed RNA polymerase subunit beta (1068 aa).

The protein belongs to the RNA polymerase beta chain family. In plastids the minimal PEP RNA polymerase catalytic core is composed of four subunits: alpha, beta, beta', and beta''. When a (nuclear-encoded) sigma factor is associated with the core the holoenzyme is formed, which can initiate transcription.

It localises to the plastid. The protein resides in the chloroplast. It catalyses the reaction RNA(n) + a ribonucleoside 5'-triphosphate = RNA(n+1) + diphosphate. Its function is as follows. DNA-dependent RNA polymerase catalyzes the transcription of DNA into RNA using the four ribonucleoside triphosphates as substrates. This is DNA-directed RNA polymerase subunit beta from Staurastrum punctulatum (Green alga).